The following is a 555-amino-acid chain: Sulfite reductase [ferredoxin] 1 (555 aa).

Positions 69–161 (YTQREQGYDG…SVGLQTTEAC (93 aa)) form a cross-link, 3'-(S-cysteinyl)-tyrosine (Tyr-Cys). Cysteine 417, cysteine 423, cysteine 463, and cysteine 467 together coordinate [4Fe-4S] cluster. Siroheme is bound at residue cysteine 467.

It belongs to the nitrite and sulfite reductase 4Fe-4S domain family. As to quaternary structure, monomer. Siroheme is required as a cofactor. It depends on [4Fe-4S] cluster as a cofactor.

The enzyme catalyses hydrogen sulfide + 6 oxidized [2Fe-2S]-[ferredoxin] + 3 H2O = sulfite + 6 reduced [2Fe-2S]-[ferredoxin] + 7 H(+). Its function is as follows. Catalyzes the reduction of sulfite to sulfide, a step in the biosynthesis of sulfur-containing amino acids and cofactors. This Mycolicibacterium paratuberculosis (strain ATCC BAA-968 / K-10) (Mycobacterium paratuberculosis) protein is Sulfite reductase [ferredoxin] 1 (sir1).